Consider the following 308-residue polypeptide: tRNA uridine(34) hydroxylase (308 aa).

The 95-residue stretch at 129-223 (QEKDVLILDA…YGKHPETQGV (95 aa)) folds into the Rhodanese domain. The Cysteine persulfide intermediate role is filled by Cys183.

It belongs to the TrhO family.

It catalyses the reaction uridine(34) in tRNA + AH2 + O2 = 5-hydroxyuridine(34) in tRNA + A + H2O. In terms of biological role, catalyzes oxygen-dependent 5-hydroxyuridine (ho5U) modification at position 34 in tRNAs. The polypeptide is tRNA uridine(34) hydroxylase (Aster yellows witches'-broom phytoplasma (strain AYWB)).